The sequence spans 215 residues: Probable phosphoglycerate mutase GpmB (215 aa).

Residues 8–15, 21–22, Arg-58, Arg-60, 82–85, 104–105, and 151–152 contribute to the substrate site; these read RHGETQWN, QG, ELNM, RR, and GI. His-9 (tele-phosphohistidine intermediate) is an active-site residue. The active-site Proton donor/acceptor is Glu-82.

Belongs to the phosphoglycerate mutase family. GpmB subfamily.

It catalyses the reaction (2R)-2-phosphoglycerate = (2R)-3-phosphoglycerate. The protein operates within carbohydrate degradation; glycolysis; pyruvate from D-glyceraldehyde 3-phosphate: step 3/5. The sequence is that of Probable phosphoglycerate mutase GpmB from Shigella dysenteriae serotype 1 (strain Sd197).